A 453-amino-acid polypeptide reads, in one-letter code: Sodium/alanine symporter AgcS (453 aa).

Residues 1–17 (MDFVSLVNTVNSFVWGP) lie on the Extracellular side of the membrane. A helical membrane pass occupies residues 18–32 (YMLVLLLGTGIFLTL). The Cytoplasmic segment spans residues 33-67 (RLGFMQIHTLPYALKLAFSKHQDETSEGDISHFQA). The chain crosses the membrane as a helical span at residues 68 to 89 (LMTALAATIGTGNIAGVATAYV). Thr75 serves as a coordination point for D-alanine. Thr75 and Gly79 together coordinate L-alanine. A D-alanine-binding site is contributed by Asn80. Residues 90–92 (LGG) lie on the Extracellular side of the membrane. The chain crosses the membrane as a helical span at residues 93–111 (PGAIFWMWVTAFFGMATKY). Residues 112-148 (AEAVLAIKYRTVDDNGEMAGGPMYFLEKGLPDHGLGK) are Cytoplasmic-facing. A helical membrane pass occupies residues 149–179 (ILGVAFAFFGAFAAFGIGNMVQTNSVADAVA). Gln170 provides a ligand contact to D-alanine. Gln170 lines the L-alanine pocket. The Extracellular portion of the chain corresponds to 180-186 (SNFGVDP). A helical membrane pass occupies residues 187-202 (LITGFVLAIFTAAVIL). Over 203-206 (GGIK) the chain is Cytoplasmic. A helical transmembrane segment spans residues 207–233 (SIGKATGIIVPFMAVFYILAGLVILAM). Over 234–258 (NIGYIIPAFGTIFSSAFNFSAGFGA) the chain is Extracellular. Residues 259-274 (LIGTAIMWGVKRGVFS) form a helical membrane-spanning segment. Position 273-274 (273-274 (FS)) interacts with D-alanine. Position 273 to 276 (273 to 276 (FSNE)) interacts with L-alanine. Residues 275-300 (NEAGLGSAPIAAAAAKTDHPGRQALV) lie on the Cytoplasmic side of the membrane. The chain crosses the membrane as a helical span at residues 301-322 (SMTGTFLDTIVVCTITGLVLTI). Residues 323-350 (AGLKAFPGLTDLTGASLTAASFDALMPM) are Extracellular-facing. The helical transmembrane segment at 351–378 (GGLIVTIGLVFFAYSTVLGWSYYGEKCF) threads the bilayer. Residues 379–386 (EYLIGTKG) lie on the Cytoplasmic side of the membrane. The chain crosses the membrane as a helical span at residues 387–403 (IRLYRIAFVLVAFWGAT). Residues 404–408 (ASLPL) are Extracellular-facing. A helical membrane pass occupies residues 409-430 (VWNIADTLNGAMAIPNLIGLLL). The Cytoplasmic segment spans residues 431–453 (LSGVVVSETKAFNEIRKNEAKNA).

This sequence belongs to the alanine or glycine:cation symporter (AGCS) (TC 2.A.25) family.

The protein resides in the cell membrane. The enzyme catalyses D-alanine(in) + Na(+)(in) = D-alanine(out) + Na(+)(out). The catalysed reaction is L-alanine(in) + Na(+)(in) = L-alanine(out) + Na(+)(out). It catalyses the reaction glycine(in) + Na(+)(in) = glycine(out) + Na(+)(out). In terms of biological role, catalyzes the sodium-dependent uptake of extracellular D-alanine and L-alanine. Can also transport glycine. Binds glycine and both enantiomers of alanine, while strictly excluding other amino acids. The chain is Sodium/alanine symporter AgcS from Methanococcus maripaludis (strain DSM 14266 / JCM 13030 / NBRC 101832 / S2 / LL).